The sequence spans 244 residues: EFFHGWYMEPLTKGRYPAIMRKIVGSRLPKFNKTEAKLVTGSYDFLGLNYYVTQYAKPKPNPYPSETHTAMMDAGVDLTFKNSRGEYPGPVFAEDANSYYYPKGIYYVMDYFKTKYGNPLIYITENGISTPGSENRCEAIADYKRIDYLCSHLCFLRKVIKEKGVNVRGYFAWALGDNYEFGKGFTVRFGLSYVNWDNLDDRNLKESGKWYQRFINGTAKNSAKQDFLRSSLSSQSQKKRLADA.

Asn-32 carries N-linked (GlcNAc...) asparagine glycosylation. Tyr-51 is a binding site for substrate. Glu-125 serves as the catalytic Nucleophile. Substrate contacts are provided by residues Trp-173 and 180–181 (EF). Residue Asn-216 is glycosylated (N-linked (GlcNAc...) asparagine).

Belongs to the glycosyl hydrolase 1 family. Homodimer. As to expression, in vacuoles called myrosin grains of a certain class of cells, myrosin cells, distributed in the cotyledons and the axis of the embryo as well as in different organs of the growing plant.

The protein localises to the vacuole. It catalyses the reaction a thioglucoside + H2O = a sugar + a thiol.. In terms of biological role, degradation of glucosinolates (glucose residue linked by a thioglucoside bound to an amino acid derivative) to glucose, sulfate and any of the products: thiocyanates, isothiocyanates, nitriles, epithionitriles or oxazolidine-2-thiones. The protein is Myrosinase MB1 of Sinapis alba (White mustard).